Reading from the N-terminus, the 365-residue chain is Histidinol-phosphate aminotransferase (365 aa).

The segment at 1–22 is disordered; the sequence is MSRPVPNPGILDIAPYTPGKSP. An N6-(pyridoxal phosphate)lysine modification is found at lysine 221.

It belongs to the class-II pyridoxal-phosphate-dependent aminotransferase family. Histidinol-phosphate aminotransferase subfamily. In terms of assembly, homodimer. Pyridoxal 5'-phosphate serves as cofactor.

The catalysed reaction is L-histidinol phosphate + 2-oxoglutarate = 3-(imidazol-4-yl)-2-oxopropyl phosphate + L-glutamate. It functions in the pathway amino-acid biosynthesis; L-histidine biosynthesis; L-histidine from 5-phospho-alpha-D-ribose 1-diphosphate: step 7/9. The sequence is that of Histidinol-phosphate aminotransferase from Nitrobacter winogradskyi (strain ATCC 25391 / DSM 10237 / CIP 104748 / NCIMB 11846 / Nb-255).